Reading from the N-terminus, the 562-residue chain is Putative transport protein PC1_1686 (562 aa).

Helical transmembrane passes span 8 to 28 (LLNG…LCLG), 32 to 52 (LGPV…LLGQ), 66 to 86 (FMLF…SIFF), 93 to 113 (FMLA…LGKF), 116 to 136 (WGIG…PVLV), and 158 to 178 (HLSL…IFGA). 2 RCK C-terminal domains span residues 202-288 (LDAD…NFRD) and 292-373 (VFDR…RIGF). Transmembrane regions (helical) follow at residues 383-403 (LLAF…TIQF), 406-426 (FTFG…LGFL), 447-467 (FGLM…INSS), 478-498 (SGLI…AYVL), and 537-557 (GTYA…VIIW).

This sequence belongs to the AAE transporter (TC 2.A.81) family. YbjL subfamily.

It localises to the cell membrane. This Pectobacterium carotovorum subsp. carotovorum (strain PC1) protein is Putative transport protein PC1_1686.